Reading from the N-terminus, the 397-residue chain is Acetate kinase (397 aa).

Asn8 is a binding site for Mg(2+). Lys15 is an ATP binding site. Residue Arg90 coordinates substrate. The Proton donor/acceptor role is filled by Asp147. 207–211 (HLGAG) is a binding site for ATP. Mg(2+) is bound at residue Glu382.

This sequence belongs to the acetokinase family. As to quaternary structure, homodimer. Requires Mg(2+) as cofactor. Mn(2+) serves as cofactor.

Its subcellular location is the cytoplasm. The catalysed reaction is acetate + ATP = acetyl phosphate + ADP. It functions in the pathway metabolic intermediate biosynthesis; acetyl-CoA biosynthesis; acetyl-CoA from acetate: step 1/2. In terms of biological role, catalyzes the formation of acetyl phosphate from acetate and ATP. Can also catalyze the reverse reaction. The polypeptide is Acetate kinase (Lactiplantibacillus plantarum (strain ATCC BAA-793 / NCIMB 8826 / WCFS1) (Lactobacillus plantarum)).